Here is a 264-residue protein sequence, read N- to C-terminus: Thymidylate synthase (264 aa).

Arginine 21 serves as a coordination point for dUMP. A (6R)-5,10-methylene-5,6,7,8-tetrahydrofolate-binding site is contributed by histidine 51. 126–127 lines the dUMP pocket; it reads RR. The active-site Nucleophile is the cysteine 146. Residues 166 to 169, asparagine 177, and 207 to 209 contribute to the dUMP site; these read RSAD and HLY. Position 169 (aspartate 169) interacts with (6R)-5,10-methylene-5,6,7,8-tetrahydrofolate. Alanine 263 contributes to the (6R)-5,10-methylene-5,6,7,8-tetrahydrofolate binding site.

It belongs to the thymidylate synthase family. Bacterial-type ThyA subfamily. In terms of assembly, homodimer.

The protein localises to the cytoplasm. It catalyses the reaction dUMP + (6R)-5,10-methylene-5,6,7,8-tetrahydrofolate = 7,8-dihydrofolate + dTMP. The protein operates within pyrimidine metabolism; dTTP biosynthesis. Functionally, catalyzes the reductive methylation of 2'-deoxyuridine-5'-monophosphate (dUMP) to 2'-deoxythymidine-5'-monophosphate (dTMP) while utilizing 5,10-methylenetetrahydrofolate (mTHF) as the methyl donor and reductant in the reaction, yielding dihydrofolate (DHF) as a by-product. This enzymatic reaction provides an intracellular de novo source of dTMP, an essential precursor for DNA biosynthesis. The protein is Thymidylate synthase of Legionella pneumophila subsp. pneumophila (strain Philadelphia 1 / ATCC 33152 / DSM 7513).